The following is a 242-amino-acid chain: Ribosomal RNA small subunit methyltransferase G (242 aa).

S-adenosyl-L-methionine contacts are provided by residues Gly78, Leu83, 130–131, and Arg151; that span reads AE.

Belongs to the methyltransferase superfamily. RNA methyltransferase RsmG family.

The protein localises to the cytoplasm. Specifically methylates the N7 position of guanine in position 518 of 16S rRNA. In Salinispora tropica (strain ATCC BAA-916 / DSM 44818 / JCM 13857 / NBRC 105044 / CNB-440), this protein is Ribosomal RNA small subunit methyltransferase G.